Consider the following 663-residue polypeptide: UvrABC system protein B (663 aa).

A Helicase ATP-binding domain is found at 27–414 (KNIENGVKDQ…SDNHIAEQLI (388 aa)). 40–47 (GVTGSGKT) contacts ATP. The short motif at 93-116 (YYDYYQPEAYIKTTDTYIEKDSSV) is the Beta-hairpin element. The Helicase C-terminal domain occupies 432–594 (QVDDLLDEIR…IDPKSIIKEI (163 aa)). In terms of domain architecture, UVR spans 624–659 (EKEITKLEKKIKKLVEELDFEQAIILRDEMLKLKEL).

Belongs to the UvrB family. Forms a heterotetramer with UvrA during the search for lesions. Interacts with UvrC in an incision complex.

It localises to the cytoplasm. Functionally, the UvrABC repair system catalyzes the recognition and processing of DNA lesions. A damage recognition complex composed of 2 UvrA and 2 UvrB subunits scans DNA for abnormalities. Upon binding of the UvrA(2)B(2) complex to a putative damaged site, the DNA wraps around one UvrB monomer. DNA wrap is dependent on ATP binding by UvrB and probably causes local melting of the DNA helix, facilitating insertion of UvrB beta-hairpin between the DNA strands. Then UvrB probes one DNA strand for the presence of a lesion. If a lesion is found the UvrA subunits dissociate and the UvrB-DNA preincision complex is formed. This complex is subsequently bound by UvrC and the second UvrB is released. If no lesion is found, the DNA wraps around the other UvrB subunit that will check the other stand for damage. In Fusobacterium nucleatum subsp. nucleatum (strain ATCC 25586 / DSM 15643 / BCRC 10681 / CIP 101130 / JCM 8532 / KCTC 2640 / LMG 13131 / VPI 4355), this protein is UvrABC system protein B.